Here is a 452-residue protein sequence, read N- to C-terminus: Pup--protein ligase (452 aa).

Mg(2+) is bound at residue Glu9. Arg53 contributes to the ATP binding site. Tyr55 lines the Mg(2+) pocket. Asp57 serves as the catalytic Proton acceptor. Glu63 is a binding site for Mg(2+). ATP is bound by residues Thr66 and Trp419.

It belongs to the Pup ligase/Pup deamidase family. Pup-conjugating enzyme subfamily.

The enzyme catalyses ATP + [prokaryotic ubiquitin-like protein]-L-glutamate + [protein]-L-lysine = ADP + phosphate + N(6)-([prokaryotic ubiquitin-like protein]-gamma-L-glutamyl)-[protein]-L-lysine.. It participates in protein degradation; proteasomal Pup-dependent pathway. It functions in the pathway protein modification; protein pupylation. Catalyzes the covalent attachment of the prokaryotic ubiquitin-like protein modifier Pup to the proteasomal substrate proteins, thereby targeting them for proteasomal degradation. This tagging system is termed pupylation. The ligation reaction involves the side-chain carboxylate of the C-terminal glutamate of Pup and the side-chain amino group of a substrate lysine. The chain is Pup--protein ligase from Salinispora tropica (strain ATCC BAA-916 / DSM 44818 / JCM 13857 / NBRC 105044 / CNB-440).